The chain runs to 142 residues: MAIERTLSIIKPDAVAKNVIGKIYSRFESNGLKVIAARMTWLSEQEAGQFYSVHKERPFFKDLVSFMTSGPVMIQALEGENAIAKNRELMGATDPKKADAGTIRADFAESIDANAVHGSDAPETAAVEIAFFFPGMNTYAGR.

Lys-11, Phe-59, Arg-87, Thr-93, Arg-104, and Asn-114 together coordinate ATP. His-117 (pros-phosphohistidine intermediate) is an active-site residue.

This sequence belongs to the NDK family. Homotetramer. The cofactor is Mg(2+).

It is found in the cytoplasm. It catalyses the reaction a 2'-deoxyribonucleoside 5'-diphosphate + ATP = a 2'-deoxyribonucleoside 5'-triphosphate + ADP. The catalysed reaction is a ribonucleoside 5'-diphosphate + ATP = a ribonucleoside 5'-triphosphate + ADP. In terms of biological role, major role in the synthesis of nucleoside triphosphates other than ATP. The ATP gamma phosphate is transferred to the NDP beta phosphate via a ping-pong mechanism, using a phosphorylated active-site intermediate. This chain is Nucleoside diphosphate kinase, found in Dechloromonas aromatica (strain RCB).